Reading from the N-terminus, the 386-residue chain is L-lactate dehydrogenase (386 aa).

The FMN hydroxy acid dehydrogenase domain occupies 1–380; it reads MIISASTDYR…TSDSLVQVTQ (380 aa). Tyrosine 24 contacts substrate. Residues serine 106 and glutamine 127 each coordinate FMN. Tyrosine 129 is a binding site for substrate. Threonine 155 contacts FMN. Arginine 164 lines the substrate pocket. Lysine 251 contributes to the FMN binding site. Histidine 275 serves as the catalytic Proton acceptor. Arginine 278 is a binding site for substrate. 306 to 330 lines the FMN pocket; sequence DSGIRSGLDVVRMIALGADGVMLGR.

The protein belongs to the FMN-dependent alpha-hydroxy acid dehydrogenase family. The cofactor is FMN.

The protein localises to the cell inner membrane. It carries out the reaction (S)-lactate + A = pyruvate + AH2. Catalyzes the conversion of L-lactate to pyruvate. Is coupled to the respiratory chain. This chain is L-lactate dehydrogenase, found in Pectobacterium atrosepticum (strain SCRI 1043 / ATCC BAA-672) (Erwinia carotovora subsp. atroseptica).